The sequence spans 434 residues: MTKTDIATRVHNHTWKLDPIVRSLIDTDFYKLLMLQMIWKLYPEVDATFSLINRTKTVRLAEEIDEMELREQLDHARTLRLSKKENIWLAGNTFYGRSQIFEPEFLSWLSSYQLPEYELFKRDGQYELNFHGRWMDTTLWEIPALSIINELRSRSAMRSLGYFTLDVLYARAKAKMWEKVERLRELPGLRISDFGTRRRHSFLWQRWCVEALKEGIGPAFTGTSNVLLAMDSDLEAVGTNAHELPMVVAALAQTNEELAAAPYQVLKDWNRLYGGNLLIVLPDAFGTAAFLRNAPEWVADWTGFRPDSAPPIEGGEKIIEWWRKMGRDPRTKMLIFSDGLDVDAIVDTYRHFEGRVRMSFGWGTNLTNDFAGCAPKTIASLKPISIVCKVSDANGRPAVKLSDNPQKATGDPAEVERYLKFFGEEDHKEQKVLV.

Histidine 242 carries the phosphohistidine; by autocatalysis modification.

The protein belongs to the NAPRTase family. Transiently phosphorylated on a His residue during the reaction cycle. Phosphorylation strongly increases the affinity for substrates and increases the rate of nicotinate D-ribonucleotide production. Dephosphorylation regenerates the low-affinity form of the enzyme, leading to product release.

The enzyme catalyses nicotinate + 5-phospho-alpha-D-ribose 1-diphosphate + ATP + H2O = nicotinate beta-D-ribonucleotide + ADP + phosphate + diphosphate. The protein operates within cofactor biosynthesis; NAD(+) biosynthesis; nicotinate D-ribonucleotide from nicotinate: step 1/1. Its function is as follows. Catalyzes the synthesis of beta-nicotinate D-ribonucleotide from nicotinate and 5-phospho-D-ribose 1-phosphate at the expense of ATP. In Agrobacterium fabrum (strain C58 / ATCC 33970) (Agrobacterium tumefaciens (strain C58)), this protein is Nicotinate phosphoribosyltransferase.